A 200-amino-acid polypeptide reads, in one-letter code: Lipopolysaccharide core heptose(II)-phosphate phosphatase (200 aa).

The signal sequence occupies residues 1–25 (MLAFCRSSLKSKKYIIILLALAAIA).

Belongs to the phosphoglycerate mutase family. Ais subfamily.

It localises to the periplasm. Its pathway is bacterial outer membrane biogenesis; lipopolysaccharide metabolism. Catalyzes the dephosphorylation of heptose(II) of the outer membrane lipopolysaccharide core. This chain is Lipopolysaccharide core heptose(II)-phosphate phosphatase, found in Escherichia coli (strain ATCC 8739 / DSM 1576 / NBRC 3972 / NCIMB 8545 / WDCM 00012 / Crooks).